A 195-amino-acid chain; its full sequence is Penicillin-binding protein activator LpoB (195 aa).

An N-terminal signal peptide occupies residues 1-16; that stretch reads MKKYLFVALAALVLTG. Residue cysteine 17 is the site of N-palmitoyl cysteine attachment. The S-diacylglycerol cysteine moiety is linked to residue cysteine 17. The segment at 19 to 55 is disordered; sequence SRPPEPEQPQPPVTVEPVTPPVVEEPQPPVTEPVPQP. 2 stretches are compositionally biased toward pro residues: residues 24-38 and 44-55; these read PEQPQPPVTVEPVTP and PQPPVTEPVPQP.

The protein belongs to the LpoB family. In terms of assembly, interacts with PBP1b.

The protein localises to the cell outer membrane. Its function is as follows. Regulator of peptidoglycan synthesis that is essential for the function of penicillin-binding protein 1B (PBP1b). The protein is Penicillin-binding protein activator LpoB of Serratia proteamaculans (strain 568).